The chain runs to 148 residues: Large ribosomal subunit protein bL9 (148 aa).

This sequence belongs to the bacterial ribosomal protein bL9 family.

Functionally, binds to the 23S rRNA. This Thermus thermophilus (strain ATCC BAA-163 / DSM 7039 / HB27) protein is Large ribosomal subunit protein bL9.